The primary structure comprises 736 residues: Elongation factor 2 (736 aa).

In terms of domain architecture, tr-type G spans 18–262 (TRVRNIGIIA…AVIKFVPNPV (245 aa)). Residues 27-34 (AHVDHGKT), 93-97 (DTPGH), and 147-150 (NKVD) each bind GTP. His-603 is modified (diphthamide).

Belongs to the TRAFAC class translation factor GTPase superfamily. Classic translation factor GTPase family. EF-G/EF-2 subfamily.

Its subcellular location is the cytoplasm. Its function is as follows. Catalyzes the GTP-dependent ribosomal translocation step during translation elongation. During this step, the ribosome changes from the pre-translocational (PRE) to the post-translocational (POST) state as the newly formed A-site-bound peptidyl-tRNA and P-site-bound deacylated tRNA move to the P and E sites, respectively. Catalyzes the coordinated movement of the two tRNA molecules, the mRNA and conformational changes in the ribosome. The protein is Elongation factor 2 of Metallosphaera sedula (strain ATCC 51363 / DSM 5348 / JCM 9185 / NBRC 15509 / TH2).